Here is a 428-residue protein sequence, read N- to C-terminus: Folylpolyglutamate synthase (428 aa).

49–52 (GKGS) lines the ATP pocket. Ser73 contributes to the Mg(2+) binding site. (6R)-5,10-methylenetetrahydrofolyl-(gamma-L-Glu)n-binding residues include Phe75 and Arg82. Mg(2+) contacts are provided by Glu143 and His170. An N6-carboxylysine modification is found at Lys185. ATP-binding positions include Asn264, Arg300, and 313-316 (DGAH). Ser417 is a binding site for (6R)-5,10-methylenetetrahydrofolyl-(gamma-L-Glu)n.

This sequence belongs to the folylpolyglutamate synthase family. In terms of assembly, monomer. The cofactor is Mg(2+).

It carries out the reaction (6S)-5,6,7,8-tetrahydrofolyl-(gamma-L-Glu)(n) + L-glutamate + ATP = (6S)-5,6,7,8-tetrahydrofolyl-(gamma-L-Glu)(n+1) + ADP + phosphate + H(+). The enzyme catalyses (6R)-5,10-methylenetetrahydrofolyl-(gamma-L-Glu)(n) + L-glutamate + ATP = (6R)-5,10-methylenetetrahydrofolyl-(gamma-L-Glu)(n+1) + ADP + phosphate + H(+). The catalysed reaction is 10-formyltetrahydrofolyl-(gamma-L-Glu)(n) + L-glutamate + ATP = 10-formyltetrahydrofolyl-(gamma-L-Glu)(n+1) + ADP + phosphate + H(+). Its activity is regulated as follows. Competitively inhibited by adenosine 5'-(3-thio)triphosphate and beta,gamma-methylene-ATP. In terms of biological role, involved in the conversion of folates to polyglutamate derivatives, and likely functions in the retention of cellular folate pools. Catalyzes successive MgATP-dependent additions of glutamate to a pteroylmonoglutamate substrate, with a high preference for 5,10-methylenetetrahydrofolate (mTHF). Thus, metabolizes mTHF to the tetraglutamate derivative, but longer glutamate chain length products are not observed. Tetrahydrofolate (H4PteGlu) and 10-formyl-H4PteGlu are poorer folate substrates. In contrast to E.coli FolC, this enzyme does not display dihydrofolate synthase activity. This chain is Folylpolyglutamate synthase, found in Lacticaseibacillus casei (Lactobacillus casei).